Reading from the N-terminus, the 385-residue chain is HAT1-interacting factor 1 (385 aa).

The interval 80 to 199 (GNLFGDALLA…RKSGFHIYFE (120 aa)) is important for interaction with heterotetrameric histone H3 and H4 and for interaction with dimeric histone H2A and H2B. 2 stretches are compositionally biased toward low complexity: residues 85–97 (DALL…SGSE) and 105–116 (DVSNGEEGNENG). Residues 85 to 163 (DALLAGDDGS…EEENVEKEEE (79 aa)) are disordered. Over residues 129 to 160 (DQEEEDLTGDVDSGDSEDSGEGSEEEEENVEK) the composition is skewed to acidic residues. The residue at position 174 (Ser174) is a Phosphoserine. TPR repeat units follow at residues 186–220 (VSQL…LGRP), 229–262 (ENSR…YLKA), and 289–322 (ALRW…RPKD). The tract at residues 248-332 (EAEMFSRAIH…SELQQARLAQ (85 aa)) is interaction with dimeric histone H2A and H2B. The segment at 340-385 (VQENQQHGSKRPLSQPTTSIGFPALEKPLGDFNDLSQLVKKKPRRH) is disordered. Polar residues predominate over residues 342-359 (ENQQHGSKRPLSQPTTSI).

This sequence belongs to the NASP family. Homodimer. The homodimer interacts with a histone tetramer containing H3 and H4; the interaction is direct. The homodimer interacts with heterodimeric histone H2A and H2B; the interaction is direct. Component of the nuclear histone acetyltransferase B (HAT-B) complex composed of at least HAT1, HAT2 and HIF1. Does not interact with HAT1 in the absence of HAT2. Interacts with histones H3 and H4 in a HAT1/HAT2 dependent manner. Interaction with heterotetrameric histone H3 and H4 precludes interaction with dimeric histone H2A and H2B, irrespective of the fact that their binding involves non-identical regions of the protein.

It localises to the nucleus. Its function is as follows. Histone H3 and H4 specific chaperone component of the nuclear histone acetyltransferase B (HAT-B) complex. Involved in chromatin assembly and telomere silencing. The sequence is that of HAT1-interacting factor 1 (HIF1) from Saccharomyces cerevisiae (strain ATCC 204508 / S288c) (Baker's yeast).